Here is a 447-residue protein sequence, read N- to C-terminus: MTKQIITLVGRPNVGKSTLFNRLSIRKKAIVHDLPGVTRDRKYTDGKIGSFEFLLIDTPGLDEHPNSMGERLIEQTTKAILEADLICFMVDARSGILPDDKLLSSFVRKYNKPAILVVNKCEKAFDFDKEYYKLGFDSMIAISAEHGTGLIDLYDEIIAKLPEEESIETNIADPIKGDCLQIVVSGRPNAGKSTFINALINDERLLTGPEAGITRESIEIDWQYKNNHIKLIDTAGLRKKSTITESLEKLSASDTINSIKLANTVILMIDALAPLKQQDLNIASHVVNEGRSIVIVVNKWDLVKESEKEAFQEEFYYQINTHLPQVKGIPVLFISAINKQNIEQVLDACLKIYKIWNKKITTSKLNEWLNFTTEAHLLPLQKGGRRVRVKYMTQTKTRPPTFKLFSNNPEKITDSYTRYLVNNMREAFDMPGVPIRFTYVKTKNPYV.

2 consecutive EngA-type G domains span residues 4 to 165 (QIIT…PEEE) and 180 to 357 (LQIV…KIWN). GTP is bound by residues 10-17 (GRPNVGKS), 57-61 (DTPGL), 119-122 (NKCE), 186-193 (GRPNAGKS), 233-237 (DTAGL), and 298-301 (NKWD). Residues 358-443 (KKITTSKLNE…PIRFTYVKTK (86 aa)) enclose the KH-like domain.

This sequence belongs to the TRAFAC class TrmE-Era-EngA-EngB-Septin-like GTPase superfamily. EngA (Der) GTPase family. As to quaternary structure, associates with the 50S ribosomal subunit.

GTPase that plays an essential role in the late steps of ribosome biogenesis. This Rickettsia rickettsii (strain Iowa) protein is GTPase Der.